The primary structure comprises 690 residues: DNA ligase (690 aa).

NAD(+)-binding positions include aspartate 49–aspartate 53, serine 98–leucine 99, and glutamate 129. Residue lysine 131 is the N6-AMP-lysine intermediate of the active site. NAD(+) is bound by residues arginine 152, glutamate 191, lysine 308, and lysine 332. Residues cysteine 426, cysteine 429, cysteine 444, and cysteine 450 each contribute to the Zn(2+) site. Residues glutamate 607–alanine 690 enclose the BRCT domain.

Belongs to the NAD-dependent DNA ligase family. LigA subfamily. Mg(2+) serves as cofactor. Mn(2+) is required as a cofactor.

It carries out the reaction NAD(+) + (deoxyribonucleotide)n-3'-hydroxyl + 5'-phospho-(deoxyribonucleotide)m = (deoxyribonucleotide)n+m + AMP + beta-nicotinamide D-nucleotide.. Functionally, DNA ligase that catalyzes the formation of phosphodiester linkages between 5'-phosphoryl and 3'-hydroxyl groups in double-stranded DNA using NAD as a coenzyme and as the energy source for the reaction. It is essential for DNA replication and repair of damaged DNA. This is DNA ligase from Salinibacter ruber (strain DSM 13855 / M31).